A 431-amino-acid polypeptide reads, in one-letter code: Ribosomal RNA small subunit methyltransferase B (431 aa).

S-adenosyl-L-methionine-binding positions include 254–260, Asp277, Asp303, and Asp322; that span reads CAAPGGK. Cys375 serves as the catalytic Nucleophile. Residues 398 to 417 form a disordered region; the sequence is LHATGTPASPGQQNLPGPEE. The segment covering 403–412 has biased composition (polar residues); that stretch reads TPASPGQQNL.

The protein belongs to the class I-like SAM-binding methyltransferase superfamily. RsmB/NOP family.

It is found in the cytoplasm. The catalysed reaction is cytidine(967) in 16S rRNA + S-adenosyl-L-methionine = 5-methylcytidine(967) in 16S rRNA + S-adenosyl-L-homocysteine + H(+). Functionally, specifically methylates the cytosine at position 967 (m5C967) of 16S rRNA. The polypeptide is Ribosomal RNA small subunit methyltransferase B (Klebsiella pneumoniae (strain 342)).